A 619-amino-acid chain; its full sequence is Putative transcription activator BRLF1 homolog (619 aa).

2 disordered regions span residues 301–389 (LRDS…ETQS) and 563–603 (GLVS…SDEM). 2 stretches are compositionally biased toward low complexity: residues 371–389 (EAPQ…ETQS) and 567–582 (QQQA…GGPP). The segment covering 589-598 (QEQQQSSTDP) has biased composition (polar residues).

The protein belongs to the herpesviridae TAF50 family.

Functionally, transcription activation. The protein is Putative transcription activator BRLF1 homolog (50) of Connochaetes taurinus (Blue wildebeest).